Here is a 398-residue protein sequence, read N- to C-terminus: Trans-2-enoyl-CoA reductase [NADH] (398 aa).

NAD(+)-binding positions include 47 to 52, 74 to 75, 111 to 112, and 139 to 140; these read GASSGF, YE, DA, and LA. Tyr-225 contacts substrate. Catalysis depends on Tyr-235, which acts as the Proton donor. NAD(+) contacts are provided by residues Lys-244 and 274–276; that span reads LVT.

This sequence belongs to the TER reductase family. As to quaternary structure, monomer.

It carries out the reaction a 2,3-saturated acyl-CoA + NAD(+) = a (2E)-enoyl-CoA + NADH + H(+). It participates in lipid metabolism; fatty acid biosynthesis. In terms of biological role, involved in the fatty acid synthesis (FAS II). Catalyzes the reduction of the carbon-carbon double bond of crotonyl-CoA to yield butyryl-CoA. The sequence is that of Trans-2-enoyl-CoA reductase [NADH] from Clostridium acetobutylicum (strain ATCC 824 / DSM 792 / JCM 1419 / IAM 19013 / LMG 5710 / NBRC 13948 / NRRL B-527 / VKM B-1787 / 2291 / W).